Consider the following 679-residue polypeptide: DNA ligase (679 aa).

NAD(+) is bound by residues 36–40 (DAQYD), 85–86 (SL), and E116. K118 (N6-AMP-lysine intermediate) is an active-site residue. NAD(+)-binding residues include R139, E174, K300, and K324. Zn(2+) is bound by residues C418, C421, C436, and C441. The region spanning 600–679 (EGGGPLNGKV…NEFRELTGRK (80 aa)) is the BRCT domain.

This sequence belongs to the NAD-dependent DNA ligase family. LigA subfamily. Mg(2+) is required as a cofactor. Requires Mn(2+) as cofactor.

The enzyme catalyses NAD(+) + (deoxyribonucleotide)n-3'-hydroxyl + 5'-phospho-(deoxyribonucleotide)m = (deoxyribonucleotide)n+m + AMP + beta-nicotinamide D-nucleotide.. Its function is as follows. DNA ligase that catalyzes the formation of phosphodiester linkages between 5'-phosphoryl and 3'-hydroxyl groups in double-stranded DNA using NAD as a coenzyme and as the energy source for the reaction. It is essential for DNA replication and repair of damaged DNA. The sequence is that of DNA ligase from Pelotomaculum thermopropionicum (strain DSM 13744 / JCM 10971 / SI).